Here is a 511-residue protein sequence, read N- to C-terminus: Phosphoenolpyruvate carboxylase (511 aa).

The protein belongs to the PEPCase type 2 family. Homotetramer. Requires Mg(2+) as cofactor.

It catalyses the reaction oxaloacetate + phosphate = phosphoenolpyruvate + hydrogencarbonate. Functionally, catalyzes the irreversible beta-carboxylation of phosphoenolpyruvate (PEP) to form oxaloacetate (OAA), a four-carbon dicarboxylic acid source for the tricarboxylic acid cycle. The sequence is that of Phosphoenolpyruvate carboxylase from Saccharolobus islandicus (strain Y.G.57.14 / Yellowstone #1) (Sulfolobus islandicus).